A 306-amino-acid chain; its full sequence is Ribonuclease Z (306 aa).

Residues His-63, His-65, Asp-67, His-68, His-141, Asp-211, and His-269 each contribute to the Zn(2+) site. Asp-67 serves as the catalytic Proton acceptor.

This sequence belongs to the RNase Z family. In terms of assembly, homodimer. Zn(2+) serves as cofactor.

It catalyses the reaction Endonucleolytic cleavage of RNA, removing extra 3' nucleotides from tRNA precursor, generating 3' termini of tRNAs. A 3'-hydroxy group is left at the tRNA terminus and a 5'-phosphoryl group is left at the trailer molecule.. Zinc phosphodiesterase, which displays some tRNA 3'-processing endonuclease activity. Probably involved in tRNA maturation, by removing a 3'-trailer from precursor tRNA. This is Ribonuclease Z from Staphylococcus saprophyticus subsp. saprophyticus (strain ATCC 15305 / DSM 20229 / NCIMB 8711 / NCTC 7292 / S-41).